Reading from the N-terminus, the 691-residue chain is Elongation factor G (691 aa).

A tr-type G domain is found at 8-283; that stretch reads KKVRNIGIAA…AVVAYLPAPD (276 aa). GTP is bound by residues 17–24, 81–85, and 135–138; these read AHIDAGKT, DTPGH, and NKMD.

It belongs to the TRAFAC class translation factor GTPase superfamily. Classic translation factor GTPase family. EF-G/EF-2 subfamily.

The protein localises to the cytoplasm. Catalyzes the GTP-dependent ribosomal translocation step during translation elongation. During this step, the ribosome changes from the pre-translocational (PRE) to the post-translocational (POST) state as the newly formed A-site-bound peptidyl-tRNA and P-site-bound deacylated tRNA move to the P and E sites, respectively. Catalyzes the coordinated movement of the two tRNA molecules, the mRNA and conformational changes in the ribosome. In Campylobacter jejuni subsp. doylei (strain ATCC BAA-1458 / RM4099 / 269.97), this protein is Elongation factor G.